The chain runs to 388 residues: Quinolone resistance protein NorA (388 aa).

12 helical membrane-spanning segments follow: residues 5-25 (IFVLYFNIFLIFLGIGLVIPV), 42-62 (LLVAAFALSQMIISPFGGTLA), 69-89 (LIICIGLILFSVSEFMFAVGH), 99-119 (VIGGMSAGMVMPGVTGLIADI), 129-149 (FGYMSAIINSGFILGPGIGGF), 157-177 (MPFYFAGALGILAFIMSIVLI), 201-221 (WKVFITPVILTLVLSFGLSAF), 239-259 (DISIAITGGGIFGALFQIYFF), 269-289 (LTFIAWSLLYSVVVLILLVFA), 293-313 (WSIMLISFVVFIGFDMIRPAI), 331-351 (LNSTFTSMGNFIGPLIAGALF), and 355-375 (IEAPIYMAIGVSLAGVVIVLI).

It belongs to the major facilitator superfamily. TCR/Tet family.

The protein localises to the cell membrane. In terms of biological role, involved in quinolone resistance. May constitute a membrane-associated active efflux pump of hydrophilic quinolones. In Staphylococcus aureus (strain COL), this protein is Quinolone resistance protein NorA (norA).